A 338-amino-acid polypeptide reads, in one-letter code: Glycerol-3-phosphate dehydrogenase [NAD(P)+] (338 aa).

Residues Ser-14, Tyr-15, His-35, and Lys-109 each coordinate NADPH. Sn-glycerol 3-phosphate contacts are provided by Lys-109, Gly-138, and Thr-140. Residue Ala-142 participates in NADPH binding. Positions 194, 247, 257, 258, and 259 each coordinate sn-glycerol 3-phosphate. Catalysis depends on Lys-194, which acts as the Proton acceptor. Arg-258 provides a ligand contact to NADPH. NADPH is bound by residues Val-282 and Glu-284.

Belongs to the NAD-dependent glycerol-3-phosphate dehydrogenase family.

The protein resides in the cytoplasm. The catalysed reaction is sn-glycerol 3-phosphate + NAD(+) = dihydroxyacetone phosphate + NADH + H(+). It catalyses the reaction sn-glycerol 3-phosphate + NADP(+) = dihydroxyacetone phosphate + NADPH + H(+). Its pathway is membrane lipid metabolism; glycerophospholipid metabolism. Its function is as follows. Catalyzes the reduction of the glycolytic intermediate dihydroxyacetone phosphate (DHAP) to sn-glycerol 3-phosphate (G3P), the key precursor for phospholipid synthesis. The sequence is that of Glycerol-3-phosphate dehydrogenase [NAD(P)+] from Shewanella sediminis (strain HAW-EB3).